The primary structure comprises 129 residues: Small ribosomal subunit protein uS11 (129 aa).

The protein belongs to the universal ribosomal protein uS11 family. As to quaternary structure, part of the 30S ribosomal subunit. Interacts with proteins S7 and S18. Binds to IF-3.

Located on the platform of the 30S subunit, it bridges several disparate RNA helices of the 16S rRNA. Forms part of the Shine-Dalgarno cleft in the 70S ribosome. The chain is Small ribosomal subunit protein uS11 from Parabacteroides distasonis (strain ATCC 8503 / DSM 20701 / CIP 104284 / JCM 5825 / NCTC 11152).